The chain runs to 619 residues: DNA mismatch repair protein MutL (619 aa).

The interval 358 to 401 (GGNQFARPSEAREAATRFSITSSREPAASGGSSGGASWPHAQPG) is disordered.

This sequence belongs to the DNA mismatch repair MutL/HexB family.

This protein is involved in the repair of mismatches in DNA. It is required for dam-dependent methyl-directed DNA mismatch repair. May act as a 'molecular matchmaker', a protein that promotes the formation of a stable complex between two or more DNA-binding proteins in an ATP-dependent manner without itself being part of a final effector complex. This is DNA mismatch repair protein MutL from Klebsiella pneumoniae (strain 342).